A 153-amino-acid chain; its full sequence is Aspartate carbamoyltransferase regulatory chain (153 aa).

The Zn(2+) site is built by Cys109, Cys114, Cys138, and Cys141.

This sequence belongs to the PyrI family. Contains catalytic and regulatory chains. Zn(2+) serves as cofactor.

Functionally, involved in allosteric regulation of aspartate carbamoyltransferase. This chain is Aspartate carbamoyltransferase regulatory chain, found in Enterobacter sp. (strain 638).